A 93-amino-acid chain; its full sequence is Protein F-93 (93 aa).

Homodimer.

Its function is as follows. Probable transcription factor that recognizes a (pseudo-)palindromic DNA target sequence. This chain is Protein F-93, found in Saccharolobus solfataricus (Sulfolobus solfataricus).